The primary structure comprises 477 residues: Aspartyl/glutamyl-tRNA(Asn/Gln) amidotransferase subunit B (477 aa).

This sequence belongs to the GatB/GatE family. GatB subfamily. In terms of assembly, heterotrimer of A, B and C subunits.

It catalyses the reaction L-glutamyl-tRNA(Gln) + L-glutamine + ATP + H2O = L-glutaminyl-tRNA(Gln) + L-glutamate + ADP + phosphate + H(+). It carries out the reaction L-aspartyl-tRNA(Asn) + L-glutamine + ATP + H2O = L-asparaginyl-tRNA(Asn) + L-glutamate + ADP + phosphate + 2 H(+). Allows the formation of correctly charged Asn-tRNA(Asn) or Gln-tRNA(Gln) through the transamidation of misacylated Asp-tRNA(Asn) or Glu-tRNA(Gln) in organisms which lack either or both of asparaginyl-tRNA or glutaminyl-tRNA synthetases. The reaction takes place in the presence of glutamine and ATP through an activated phospho-Asp-tRNA(Asn) or phospho-Glu-tRNA(Gln). This Coxiella burnetii (strain RSA 493 / Nine Mile phase I) protein is Aspartyl/glutamyl-tRNA(Asn/Gln) amidotransferase subunit B.